The sequence spans 343 residues: GTPase Obg (343 aa).

The region spanning 1–159 (MKFLDQAKIY…RWVWLRLKLI (159 aa)) is the Obg domain. An OBG-type G domain is found at 160–328 (ADAGLVGLPN…LLRQVMTYVA (169 aa)). Residues 166 to 173 (GLPNAGKS), 191 to 195 (FTTLH), 213 to 216 (DIPG), 280 to 283 (NKCD), and 309 to 311 (SGV) each bind GTP. Mg(2+)-binding residues include serine 173 and threonine 193.

This sequence belongs to the TRAFAC class OBG-HflX-like GTPase superfamily. OBG GTPase family. In terms of assembly, monomer. It depends on Mg(2+) as a cofactor.

It is found in the cytoplasm. In terms of biological role, an essential GTPase which binds GTP, GDP and possibly (p)ppGpp with moderate affinity, with high nucleotide exchange rates and a fairly low GTP hydrolysis rate. Plays a role in control of the cell cycle, stress response, ribosome biogenesis and in those bacteria that undergo differentiation, in morphogenesis control. The polypeptide is GTPase Obg (Granulibacter bethesdensis (strain ATCC BAA-1260 / CGDNIH1)).